The chain runs to 459 residues: Serine carboxypeptidase-like 27 (459 aa).

An N-terminal signal peptide occupies residues methionine 1–alanine 20. Cystine bridges form between cysteine 91/cysteine 344, cysteine 252/cysteine 264, and cysteine 288/cysteine 312. Asparagine 142 is a glycosylation site (N-linked (GlcNAc...) asparagine). Serine 184 is an active-site residue. N-linked (GlcNAc...) asparagine glycans are attached at residues asparagine 289 and asparagine 333. Active-site residues include aspartate 381 and histidine 433.

Belongs to the peptidase S10 family. As to expression, ubiquitous.

The protein resides in the secreted. Functionally, probable carboxypeptidase. This Arabidopsis thaliana (Mouse-ear cress) protein is Serine carboxypeptidase-like 27 (SCPL27).